Consider the following 699-residue polypeptide: Nucleolar and coiled-body phosphoprotein 1 (699 aa).

The LisH domain maps to 10–42 (VPSDLYPLVLGFLRDNQLSEVANKFAKATGATQ). The residue at position 33 (lysine 33) is an N6-acetyllysine. The tract at residues 65–637 (ERKLQANGPV…VREEEIEVDS (573 aa)) is disordered. Residues lysine 67 and lysine 76 each participate in a glycyl lysine isopeptide (Lys-Gly) (interchain with G-Cter in SUMO2) cross-link. The Acidic serine cluster 1 repeat unit spans residues 84 to 95 (SSDSEDSSEEEE). The 11 X 12 AA approximate repeats of an acidic serine cluster stretch occupies residues 84–566 (SSDSEDSSEE…GKAAKNSEEE (483 aa)). Over residues 86-97 (DSEDSSEEEEEV) the composition is skewed to acidic residues. Phosphoserine occurs at positions 87, 90, and 91. A Diphosphoserine modification is found at serine 91. The segment covering 100-110 (PPAKKAAVPAK) has biased composition (low complexity). An Acidic serine cluster 2 repeat occupies 125–136 (ESSSSEESSDDD). The segment covering 144–159 (QPVQKGVKPQAKAAKA) has biased composition (low complexity). An Acidic serine cluster 3 repeat occupies 167 to 178 (SDSDSDSSSEDE). Residue lysine 186 forms a Glycyl lysine isopeptide (Lys-Gly) (interchain with G-Cter in SUMO2) linkage. Threonine 188 carries the post-translational modification Phosphothreonine. Residue lysine 193 forms a Glycyl lysine isopeptide (Lys-Gly) (interchain with G-Cter in SUMO2) linkage. Composition is skewed to low complexity over residues 193-227 (KAQTKAPPKPARAAPKIANGKAASSSSSSSSSSSS) and 236-261 (AATPKKTVPKKQVVAKAPVKAATTPT). The interval 204–382 (RAAPKIANGK…DDEAPSKPAG (179 aa)) is interaction with RPA194. One copy of the Acidic serine cluster 4 repeat lies at 221 to 232 (SSSSSSSDDSEE). The stretch at 264 to 275 (SSSSEDSSSDEE) is one Acidic serine cluster 5 repeat. Pro residues predominate over residues 291–301 (SVPPPSAPPPK). Positions 321-333 (SSEDSSDESDSSS) are enriched in acidic residues. The stretch at 325-336 (SSDESDSSSEEE) is one Acidic serine cluster 6 repeat. Glycyl lysine isopeptide (Lys-Gly) (interchain with G-Cter in SUMO2) cross-links involve residues lysine 342 and lysine 347. Serine 362, serine 363, and serine 366 each carry phosphoserine. The Acidic serine cluster 7 repeat unit spans residues 363–375 (SDSSDSDSSEDDE). Residues 366-375 (SDSDSSEDDE) show a composition bias toward acidic residues. Residues 381–397 (AGTTKNSSNKPAVTTKS) are compositionally biased toward polar residues. Residues lysine 390 and lysine 396 each participate in a glycyl lysine isopeptide (Lys-Gly) (interchain with G-Cter in SUMO2) cross-link. Serine 397 carries the post-translational modification Phosphoserine. Positions 398–409 (PAVKPAAAPKQP) are enriched in low complexity. Glycyl lysine isopeptide (Lys-Gly) (interchain with G-Cter in SUMO2) cross-links involve residues lysine 401 and lysine 407. At lysine 415 the chain carries N6-acetyllysine; alternate. A Glycyl lysine isopeptide (Lys-Gly) (interchain with G-Cter in SUMO1); alternate cross-link involves residue lysine 415. Lysine 415 participates in a covalent cross-link: Glycyl lysine isopeptide (Lys-Gly) (interchain with G-Cter in SUMO2); alternate. An Acidic serine cluster 8 repeat occupies 425 to 436 (SSEEESSSSEEE). Residues lysine 440 and lysine 452 each participate in a glycyl lysine isopeptide (Lys-Gly) (interchain with G-Cter in SUMO2) cross-link. 2 stretches are compositionally biased toward low complexity: residues 441-476 (MVATTKPKATAKAALSLPAKQAPQGSRDSSSDSDSS) and 498-523 (AGGAAPSKPASAKKGKAESSNSSSSD). Position 456 is a phosphoserine (serine 456). Residues 470 to 481 (SSDSDSSSSEEE) form an Acidic serine cluster 9 repeat. Lysine 505 is covalently cross-linked (Glycyl lysine isopeptide (Lys-Gly) (interchain with G-Cter in SUMO2)). At serine 508 the chain carries Phosphoserine. The stretch at 519 to 529 (SSSSDDSSEEE) is one Acidic serine cluster 10 repeat. A Phosphoserine modification is found at serine 538. Residues 547 to 556 (NGTSALTAQN) show a composition bias toward polar residues. The Acidic serine cluster 11 repeat unit spans residues 555–566 (QNGKAAKNSEEE). Residue serine 563 is modified to Phosphoserine. Residue lysine 572 forms a Glycyl lysine isopeptide (Lys-Gly) (interchain with G-Cter in SUMO1) linkage. Lysine 579 is covalently cross-linked (Glycyl lysine isopeptide (Lys-Gly) (interchain with G-Cter in SUMO2)). Phosphoserine is present on residues serine 580 and serine 582. Lysine 604 participates in a covalent cross-link: Glycyl lysine isopeptide (Lys-Gly) (interchain with G-Cter in SUMO2). 2 positions are modified to phosphothreonine: threonine 607 and threonine 610. Lysine 613 is covalently cross-linked (Glycyl lysine isopeptide (Lys-Gly) (interchain with G-Cter in SUMO2)). Serine 622 carries the post-translational modification Phosphoserine. Residues 627 to 637 (RVREEEIEVDS) are compositionally biased toward basic and acidic residues. Serine 643 bears the Phosphoserine mark. Lysine 647 is covalently cross-linked (Glycyl lysine isopeptide (Lys-Gly) (interchain with G-Cter in SUMO2)). Residue lysine 663 is modified to N6-acetyllysine; alternate. Residue lysine 663 forms a Glycyl lysine isopeptide (Lys-Gly) (interchain with G-Cter in SUMO2); alternate linkage. The residue at position 683 (arginine 683) is an Omega-N-methylarginine. Serine 686 bears the Phosphoserine mark. A Glycyl lysine isopeptide (Lys-Gly) (interchain with G-Cter in SUMO2) cross-link involves residue lysine 695. Serine 698 bears the Phosphoserine mark.

Belongs to the NOLC1 family. Heterodimer; heterodimerizes with TCOF1 following monoubiquitination. Interacts with RNA polymerase I 194 kDa subunit (RPA194) and with casein kinase-II. Interacts with DKC1/NAP57, NOP58 and fibrillarin. In terms of processing, undergoes rapid and massive phosphorylation/dephosphorylation cycles on CK2 and PKC sites. NOLC1 is one of the mostly phosphorylated proteins in the cell. Post-translationally, ubiquitinated. Monoubiquitination by the BCR(KBTBD8) complex promotes the formation of a NOLC1-TCOF1 complex that acts as a platform to connect RNA polymerase I with enzymes responsible for ribosomal processing and modification, leading to remodel the translational program of differentiating cells in favor of neural crest specification. Pyrophosphorylated by 5-diphosphoinositol pentakisphosphate (5-IP7). Serine pyrophosphorylation is achieved by Mg(2+)-dependent, but enzyme independent transfer of a beta-phosphate from a inositol pyrophosphate to a pre-phosphorylated serine residue.

It is found in the nucleus. The protein resides in the nucleolus. The protein localises to the cytoplasm. Nucleolar protein that acts as a regulator of RNA polymerase I by connecting RNA polymerase I with enzymes responsible for ribosomal processing and modification. Required for neural crest specification: following monoubiquitination by the BCR(KBTBD8) complex, associates with TCOF1 and acts as a platform to connect RNA polymerase I with enzymes responsible for ribosomal processing and modification, leading to remodel the translational program of differentiating cells in favor of neural crest specification. Involved in nucleologenesis, possibly by playing a role in the maintenance of the fundamental structure of the fibrillar center and dense fibrillar component in the nucleolus. It has intrinsic GTPase and ATPase activities. This Homo sapiens (Human) protein is Nucleolar and coiled-body phosphoprotein 1.